The chain runs to 199 residues: Superoxide dismutase [Fe] (199 aa).

Residues His27, His79, Asp161, and His165 each coordinate Fe cation.

Belongs to the iron/manganese superoxide dismutase family. Homodimer. It depends on Fe cation as a cofactor.

The enzyme catalyses 2 superoxide + 2 H(+) = H2O2 + O2. Destroys superoxide anion radicals which are normally produced within the cells and which are toxic to biological systems. The chain is Superoxide dismutase [Fe] (sodB) from Synechocystis sp. (strain ATCC 27184 / PCC 6803 / Kazusa).